Here is a 145-residue protein sequence, read N- to C-terminus: MVIIQNNIHDLSVNEDDLSCILQKVVKEWGKGESELLVRLVDEAEIQNLNKVYRYKDEPTNVLSFPTDLPIEIDEKILGDVVICIQIVLKESIEQHKSFNNHLMHMAVHGTLHLLGYDHIDTKDAQNMANLERKILAKIGINNPY.

3 residues coordinate Zn(2+): histidine 109, histidine 113, and histidine 119.

This sequence belongs to the endoribonuclease YbeY family. It depends on Zn(2+) as a cofactor.

It localises to the cytoplasm. Its function is as follows. Single strand-specific metallo-endoribonuclease involved in late-stage 70S ribosome quality control and in maturation of the 3' terminus of the 16S rRNA. This Vesicomyosocius okutanii subsp. Calyptogena okutanii (strain HA) protein is Endoribonuclease YbeY.